The following is a 262-amino-acid chain: MNKFLIIDGLNLVRRIYAAIPDETDMQSLTERVSSACTKLLRVHRPTHVAIVWDGDEISWRKQLYPDYKKGRKPMPEPLAQGLVALQDHLTAMHIGSIYAAAEADDVIATLAIKTAKAQGEAIIVSTDKGFSQLNHRQISQWDHFNQQYLDIAALEQKLGVERSQFLDLMALAGDSGNKIPGIAGIGPKSAAELLKTFRSLPTLFSSLSNLGAKQAKKLAEGKEMARLSYKLAQLQTDLPLNINLKDFRVIDSLPEKTINQD.

D105 is a binding site for Mg(2+). Residues 162 to 254 enclose the 5'-3' exonuclease domain; that stretch reads ERSQFLDLMA…LKDFRVIDSL (93 aa). K(+) is bound by residues L172, A173, P181, I183, and I186. The segment at 185 to 190 is interaction with DNA; the sequence is GIGPKS.

Belongs to the Xni family. The cofactor is Mg(2+). K(+) serves as cofactor.

Has flap endonuclease activity. During DNA replication, flap endonucleases cleave the 5'-overhanging flap structure that is generated by displacement synthesis when DNA polymerase encounters the 5'-end of a downstream Okazaki fragment. This Shewanella baltica (strain OS195) protein is Flap endonuclease Xni.